Consider the following 184-residue polypeptide: Effector CFEM1 (184 aa).

An N-terminal signal peptide occupies residues 1–17; sequence MKYSVAFVALAAVAAQA. Residues 18–112 enclose the CFEM domain; it reads QSLADVPKCA…PTTTAAATST (95 aa). 4 disulfides stabilise this stretch: Cys26–Cys68, Cys30–Cys63, Cys41–Cys48, and Cys50–Cys85. Position 45 (Asp45) interacts with heme. Disordered stretches follow at residues 83-106 and 136-163; these read NLCK…PTTT and IIPT…EQAN. Over residues 88 to 103 the composition is skewed to basic and acidic residues; that stretch reads PPKESEAKSTAEEEKP. Residue Asn163 is the site of GPI-anchor amidated asparagine attachment. Positions 164–184 are cleaved as a propeptide — removed in mature form; sequence GAAGLKGLGALAMAAFAALAL.

This sequence belongs to the RBT5 family. As to quaternary structure, interacts with Z.mays LRR5; the interaction is direct. Interacts (via CFEM domain) with Z.mays WAK17 isoform 2; the interaction is direct.

The protein localises to the secreted. Its subcellular location is the cell wall. The protein resides in the cell membrane. It is found in the cell septum. It localises to the cytoplasm. Functionally, suppresses host programmed cell death during infection by binding to Z.mays WAK17 isoform 2 and Z.mays LRR5, to prevent activation of Z.mays WAK17 isoform 1 and the downstream hypersensitive response. The chain is Effector CFEM1 from Gibberella zeae (strain ATCC MYA-4620 / CBS 123657 / FGSC 9075 / NRRL 31084 / PH-1) (Wheat head blight fungus).